We begin with the raw amino-acid sequence, 477 residues long: Aspartyl/glutamyl-tRNA(Asn/Gln) amidotransferase subunit B (477 aa).

Belongs to the GatB/GatE family. GatB subfamily. In terms of assembly, heterotrimer of A, B and C subunits.

It catalyses the reaction L-glutamyl-tRNA(Gln) + L-glutamine + ATP + H2O = L-glutaminyl-tRNA(Gln) + L-glutamate + ADP + phosphate + H(+). The catalysed reaction is L-aspartyl-tRNA(Asn) + L-glutamine + ATP + H2O = L-asparaginyl-tRNA(Asn) + L-glutamate + ADP + phosphate + 2 H(+). In terms of biological role, allows the formation of correctly charged Asn-tRNA(Asn) or Gln-tRNA(Gln) through the transamidation of misacylated Asp-tRNA(Asn) or Glu-tRNA(Gln) in organisms which lack either or both of asparaginyl-tRNA or glutaminyl-tRNA synthetases. The reaction takes place in the presence of glutamine and ATP through an activated phospho-Asp-tRNA(Asn) or phospho-Glu-tRNA(Gln). The chain is Aspartyl/glutamyl-tRNA(Asn/Gln) amidotransferase subunit B from Ureaplasma urealyticum serovar 10 (strain ATCC 33699 / Western).